A 96-amino-acid chain; its full sequence is UPF0235 protein Ent638_3359 (96 aa).

This sequence belongs to the UPF0235 family.

This chain is UPF0235 protein Ent638_3359, found in Enterobacter sp. (strain 638).